Consider the following 669-residue polypeptide: L-type lectin-domain containing receptor kinase V.9 (669 aa).

An N-terminal signal peptide occupies residues 1-21; it reads MKFFVLVLLLVLQFFSNKALS. Topologically, residues 22-286 are extracellular; that stretch reads QSEEGEFGFN…RDSRSTSVKK (265 aa). Positions 38–259 are legume-lectin like; that stretch reads SGIAITNSKG…SHYILGWTFK (222 aa). N-linked (GlcNAc...) asparagine glycans are attached at residues asparagine 53, asparagine 75, asparagine 124, asparagine 206, and asparagine 261. The helical transmembrane segment at 287-307 threads the bilayer; it reads ILAISLSLTSLAILVFLTISY. Over 308–669 the chain is Cytoplasmic; sequence MLFLKRKKLM…FTEPFVSHGR (362 aa). The 260-residue stretch at 344–603 folds into the Protein kinase domain; that stretch reads FRNSELLGKG…LGLFCSHPVA (260 aa). ATP contacts are provided by residues 350–358 and lysine 373; that span reads LGKGGFGKV. Catalysis depends on aspartate 469, which acts as the Proton acceptor.

The protein in the C-terminal section; belongs to the protein kinase superfamily. Ser/Thr protein kinase family. This sequence in the N-terminal section; belongs to the leguminous lectin family.

The protein resides in the cell membrane. The enzyme catalyses L-seryl-[protein] + ATP = O-phospho-L-seryl-[protein] + ADP + H(+). The catalysed reaction is L-threonyl-[protein] + ATP = O-phospho-L-threonyl-[protein] + ADP + H(+). This Arabidopsis thaliana (Mouse-ear cress) protein is L-type lectin-domain containing receptor kinase V.9 (LECRK59).